The following is a 145-amino-acid chain: uncharacterized protein (145 aa).

Substrate contacts are provided by valine 97 and asparagine 121.

It belongs to the D-isomer specific 2-hydroxyacid dehydrogenase family. FDH subfamily.

This is an uncharacterized protein from Saccharomyces cerevisiae (strain ATCC 204508 / S288c) (Baker's yeast).